The following is a 113-amino-acid chain: U11-theraphotoxin-Hhn1a (113 aa).

Residues 1-21 form the signal peptide; the sequence is MNTVRVTFLLVFVLAVSLGQA. Residues 22–74 constitute a propeptide that is removed on maturation; sequence DKDENRMEMQEKTEQGKSYLDFAENLLLQKLEELEAKLLEEDSEESRNSRQRR. The tract at residues 61 to 83 is disordered; that stretch reads EEDSEESRNSRQRRCIGEGVPCD. Disulfide bonds link cysteine 75-cysteine 90, cysteine 82-cysteine 95, and cysteine 89-cysteine 110.

This sequence belongs to the neurotoxin 14 (magi-1) family. 01 (HNTX-16) subfamily. In terms of tissue distribution, expressed by the venom gland.

The protein localises to the secreted. Its function is as follows. Probable ion channel inhibitor. This chain is U11-theraphotoxin-Hhn1a, found in Cyriopagopus hainanus (Chinese bird spider).